The chain runs to 269 residues: Formamidopyrimidine-DNA glycosylase (269 aa).

The active-site Schiff-base intermediate with DNA is Pro-2. Residue Glu-3 is the Proton donor of the active site. Lys-57 serves as the catalytic Proton donor; for beta-elimination activity. Residues His-90, Arg-109, and Lys-150 each coordinate DNA. The segment at 235–269 (QVYGKAGESCPECGEAIQELKIGQRNTFYCSYCQC) adopts an FPG-type zinc-finger fold. The active-site Proton donor; for delta-elimination activity is the Arg-259.

Belongs to the FPG family. Monomer. Requires Zn(2+) as cofactor.

It carries out the reaction Hydrolysis of DNA containing ring-opened 7-methylguanine residues, releasing 2,6-diamino-4-hydroxy-5-(N-methyl)formamidopyrimidine.. The enzyme catalyses 2'-deoxyribonucleotide-(2'-deoxyribose 5'-phosphate)-2'-deoxyribonucleotide-DNA = a 3'-end 2'-deoxyribonucleotide-(2,3-dehydro-2,3-deoxyribose 5'-phosphate)-DNA + a 5'-end 5'-phospho-2'-deoxyribonucleoside-DNA + H(+). Its function is as follows. Involved in base excision repair of DNA damaged by oxidation or by mutagenic agents. Acts as a DNA glycosylase that recognizes and removes damaged bases. Has a preference for oxidized purines, such as 7,8-dihydro-8-oxoguanine (8-oxoG). Has AP (apurinic/apyrimidinic) lyase activity and introduces nicks in the DNA strand. Cleaves the DNA backbone by beta-delta elimination to generate a single-strand break at the site of the removed base with both 3'- and 5'-phosphates. The polypeptide is Formamidopyrimidine-DNA glycosylase (Vibrio vulnificus (strain YJ016)).